Here is a 561-residue protein sequence, read N- to C-terminus: Probable xyloglucan galactosyltransferase GT20 (561 aa).

Residues methionine 1 to threonine 31 lie on the Cytoplasmic side of the membrane. Residues leucine 32 to isoleucine 52 form a helical; Signal-anchor for type II membrane protein membrane-spanning segment. Topologically, residues serine 53 to valine 561 are lumenal. N-linked (GlcNAc...) asparagine glycosylation is found at asparagine 87, asparagine 253, asparagine 277, asparagine 418, asparagine 421, and asparagine 557.

Belongs to the glycosyltransferase 47 family. Expressed in hydathodes.

The protein resides in the golgi apparatus membrane. Its function is as follows. Functions in xyloglucan synthesis by adding side chains to the xylosylated glucan backbone. Involved in the galactosylation of hemicellulose xyloglucan. This chain is Probable xyloglucan galactosyltransferase GT20, found in Arabidopsis thaliana (Mouse-ear cress).